The following is a 453-amino-acid chain: Serine protease HTRA3 (453 aa).

The N-terminal stretch at 1 to 17 (MQARALLLAALAALALA) is a signal peptide. The IGFBP N-terminal domain maps to 21–84 (PAAPCPARCD…ECVRGLCRCR (64 aa)). 8 disulfides stabilise this stretch: Cys-25-Cys-48, Cys-29-Cys-50, Cys-34-Cys-51, Cys-39-Cys-54, Cys-62-Cys-76, Cys-70-Cys-81, Cys-83-Cys-101, and Cys-90-Cys-126. The 65-residue stretch at 64-128 (GPLDSPCGES…RQLQKGACPL (65 aa)) folds into the Kazal-like domain. A serine protease region spans residues 175 to 340 (GSGFIMSEAG…AIPSDRITRF (166 aa)). Active-site charge relay system residues include His-191, Asp-227, and Ser-305. The 86-residue stretch at 359–444 (IRMRTITPSL…EVRRGNDDLL (86 aa)) folds into the PDZ domain.

It belongs to the peptidase S1C family. As to quaternary structure, homotrimer. Interacts with TGFB1; the interaction inhibits TGFB-mediated signaling. Interacts with BMP4; the interaction inhibits BMP4-mediated signaling. Interacts with TGFB2 and GDF5. Interacts with MYH9. As to expression, widely expressed, with highest levels in both adult and fetal heart, ovary, uterus placenta, and bladder. In the endometrium, expressed in epithelial glands and the stroma. Also present in leukocytes. Isoform 1 is predominant in heart and skeletal muscle, whereas isoform 2 is predominant in placenta and kidney.

It is found in the secreted. Its function is as follows. Serine protease that cleaves beta-casein/CSN2 as well as several extracellular matrix (ECM) proteoglycans such as decorin/DCN, biglycan/BGN and fibronectin/FN1. Inhibits signaling mediated by TGF-beta family proteins possibly indirectly by degradation of these ECM proteoglycans. May act as a tumor suppressor. Negatively regulates, in vitro, trophoblast invasion during placental development and may be involved in the development of the placenta in vivo. May also have a role in ovarian development, granulosa cell differentiation and luteinization. The protein is Serine protease HTRA3 (HTRA3) of Homo sapiens (Human).